Consider the following 521-residue polypeptide: Ribonuclease Y 1 (521 aa).

Residues 1 to 21 (MEIVISAIIGLLIGGTVVFVI) form a helical membrane-spanning segment. Residues 51–87 (IKKESENKAKDFESRARKNVEQDIHKQKSTLKNKESQ) are disordered. The KH domain occupies 211-271 (TVSVLALPND…VRRELARRTI (61 aa)). In terms of domain architecture, HD spans 337 to 430 (ALNQSLEVAT…VHAAYTLSSS (94 aa)).

The protein belongs to the RNase Y family.

It localises to the cell membrane. Its function is as follows. Endoribonuclease that initiates mRNA decay. In Bdellovibrio bacteriovorus (strain ATCC 15356 / DSM 50701 / NCIMB 9529 / HD100), this protein is Ribonuclease Y 1.